Reading from the N-terminus, the 600-residue chain is ATP-dependent lipid A-core flippase (600 aa).

4 consecutive transmembrane segments (helical) span residues 26–46, 82–102, 167–187, and 266–286; these read VGIFLLSILGFVIFASTQPML, LLIVLIAAWQGLGSFLGNYFL, VFLFIYLLMMNWKLTLVMLAI, and PMLQLVIYSAMAVLMFLVLFL. One can recognise an ABC transmembrane type-1 domain in the interval 30-321; that stretch reads LLSILGFVIF…LSEVSSTIQK (292 aa). One can recognise an ABC transporter domain in the interval 353–589; it reads LEVKNLSFFY…NGYYARLHAM (237 aa). Residue 387–394 participates in ATP binding; the sequence is GRSGSGKS.

It belongs to the ABC transporter superfamily. Lipid exporter (TC 3.A.1.106) family. In terms of assembly, homodimer.

Its subcellular location is the cell inner membrane. It catalyses the reaction ATP + H2O + lipid A-core oligosaccharideSide 1 = ADP + phosphate + lipid A-core oligosaccharideSide 2.. In terms of biological role, involved in lipopolysaccharide (LPS) biosynthesis. Translocates lipid A-core from the inner to the outer leaflet of the inner membrane. Transmembrane domains (TMD) form a pore in the inner membrane and the ATP-binding domain (NBD) is responsible for energy generation. In Pseudomonas syringae pv. tomato (strain ATCC BAA-871 / DC3000), this protein is ATP-dependent lipid A-core flippase.